A 681-amino-acid polypeptide reads, in one-letter code: Methionine--tRNA ligase (681 aa).

The 'HIGH' region motif lies at P14–H24. Zn(2+) contacts are provided by C145, C148, C158, and C161. A 'KMSKS' region motif is present at residues K331–S335. K334 is an ATP binding site. Positions T579 to K681 constitute a tRNA-binding domain.

The protein belongs to the class-I aminoacyl-tRNA synthetase family. MetG type 1 subfamily. In terms of assembly, homodimer. Zn(2+) is required as a cofactor.

It is found in the cytoplasm. It catalyses the reaction tRNA(Met) + L-methionine + ATP = L-methionyl-tRNA(Met) + AMP + diphosphate. Its function is as follows. Is required not only for elongation of protein synthesis but also for the initiation of all mRNA translation through initiator tRNA(fMet) aminoacylation. This Pseudomonas putida (strain W619) protein is Methionine--tRNA ligase.